The sequence spans 88 residues: Protein WIR1A (88 aa).

The Cytoplasmic segment spans residues 1–13 (MASLGSSAGGRRP). The chain crosses the membrane as a helical span at residues 14–35 (TVLLQIALFVVVAAIIINSSVC). Over 36 to 88 (LGATAVHDAAASGTGALDPNVPAVPTPGGAGQPYTGRGCRTVYGCRPPAGGQP) the chain is Extracellular.

The protein resides in the membrane. Associated with pathogen defense. This is Protein WIR1A (WIR1A) from Triticum aestivum (Wheat).